The chain runs to 856 residues: Lon protease homolog 2, peroxisomal (856 aa).

The Lon N-terminal domain maps to 13–222 (LPLLLTHEGV…VTIPLLLRQI (210 aa)). Residue 379–386 (GPPGVGKT) coordinates ATP. The segment covering 586–608 (GQHREHKSEHLEAPEGEERKESV) has biased composition (basic and acidic residues). Residues 586-614 (GQHREHKSEHLEAPEGEERKESVPEGSKS) are disordered. The Lon proteolytic domain maps to 655 to 841 (LNQPGVAIGL…DEVLNAAFDG (187 aa)). Catalysis depends on residues Ser-747 and Lys-790. A Microbody targeting signal motif is present at residues 854–856 (SKL).

The protein belongs to the peptidase S16 family.

The protein resides in the peroxisome matrix. The enzyme catalyses Hydrolysis of proteins in presence of ATP.. Functionally, ATP-dependent serine protease that mediates the selective degradation of misfolded and unassembled polypeptides in the peroxisomal matrix. Necessary for type 2 peroxisome targeting signal (PTS2)-containing protein processing and facilitates peroxisome matrix protein import. The polypeptide is Lon protease homolog 2, peroxisomal (lonp2) (Xenopus laevis (African clawed frog)).